Reading from the N-terminus, the 500-residue chain is Farnesylcysteine lyase (500 aa).

The N-terminal stretch at 1–24 (MKDFPIAISLLFALLSPVLLPCSG) is a signal peptide. N-linked (GlcNAc...) asparagine glycosylation is found at Asn56, Asn113, Asn211, and Asn281.

The protein belongs to the prenylcysteine oxidase family. The cofactor is FAD. Expressed in seedilings, flowers, stems, leaves and roots.

It is found in the lysosome. It carries out the reaction S-(2E,6E)-farnesyl-L-cysteine + O2 + H2O = (2E,6E)-farnesal + L-cysteine + H2O2. Involved in the degradation of prenylcysteine. Cleaves specifically the thioether bond of S-farnesyl-L-cysteine and has no activity with S-geranylgeranyl-L-cysteine. Also recognizes N-acetyl-farnesylcysteine and may have a role in deprenylation of farnesylated proteins. This is Farnesylcysteine lyase from Arabidopsis thaliana (Mouse-ear cress).